Reading from the N-terminus, the 199-residue chain is HTH-type transcriptional repressor NemR (199 aa).

Residues 7-67 enclose the HTH tetR-type domain; the sequence is HDTREHLLAT…AMLERHYAAY (61 aa). The H-T-H motif DNA-binding region spans 30 to 49; the sequence is GLSELLKTAEVPKGSFYHYF.

In terms of biological role, involved in response to both electrophiles and reactive chlorine species (RCS). Represses the transcription of the nemRA-gloA operon by binding to the NemR box. This Escherichia coli O6:H1 (strain CFT073 / ATCC 700928 / UPEC) protein is HTH-type transcriptional repressor NemR (nemR).